Here is a 103-residue protein sequence, read N- to C-terminus: uncharacterized protein (103 aa).

Residues 1-10 (MVVKKSKPKN) are compositionally biased toward basic residues. Disordered regions lie at residues 1–38 (MVVK…KGKK) and 77–103 (AVFS…NEKK).

This is an uncharacterized protein from Schizosaccharomyces pombe (strain 972 / ATCC 24843) (Fission yeast).